Here is a 367-residue protein sequence, read N- to C-terminus: Alanine racemase (367 aa).

Lys40 functions as the Proton acceptor; specific for D-alanine in the catalytic mechanism. Lys40 bears the N6-(pyridoxal phosphate)lysine mark. Arg136 lines the substrate pocket. Catalysis depends on Tyr263, which acts as the Proton acceptor; specific for L-alanine. Residue Met310 coordinates substrate.

It belongs to the alanine racemase family. Pyridoxal 5'-phosphate is required as a cofactor.

The catalysed reaction is L-alanine = D-alanine. The protein operates within amino-acid biosynthesis; D-alanine biosynthesis; D-alanine from L-alanine: step 1/1. In terms of biological role, catalyzes the interconversion of L-alanine and D-alanine. May also act on other amino acids. The protein is Alanine racemase (alr) of Streptococcus pneumoniae (strain ATCC 700669 / Spain 23F-1).